We begin with the raw amino-acid sequence, 197 residues long: Adenylate kinase (197 aa).

Alanine 7–threonine 15 contacts ATP.

It belongs to the archaeal adenylate kinase family.

It localises to the cytoplasm. The enzyme catalyses AMP + ATP = 2 ADP. The sequence is that of Adenylate kinase (adkA) from Pyrobaculum aerophilum (strain ATCC 51768 / DSM 7523 / JCM 9630 / CIP 104966 / NBRC 100827 / IM2).